A 168-amino-acid chain; its full sequence is Small ribosomal subunit protein uS5c (168 aa).

An S5 DRBM domain is found at 17–80; sequence WSERVIQITR…SDCKKQIIEF (64 aa).

This sequence belongs to the universal ribosomal protein uS5 family. In terms of assembly, part of the 30S ribosomal subunit. Contacts protein S4.

Its subcellular location is the plastid. It localises to the chloroplast. Functionally, with S4 and S12 plays an important role in translational accuracy. This Cyanidium caldarium (Red alga) protein is Small ribosomal subunit protein uS5c (rps5).